The sequence spans 418 residues: Nisin biosynthesis protein NisC (418 aa).

This sequence to B.subtilis SpaC and S.epidermidis EpiC.

Could be implicated in the processing or the export process of the nisin lantibiotic. The chain is Nisin biosynthesis protein NisC (nisC) from Lactococcus lactis subsp. lactis (Streptococcus lactis).